A 247-amino-acid polypeptide reads, in one-letter code: Small ribosomal subunit protein uS2 (247 aa).

This sequence belongs to the universal ribosomal protein uS2 family.

The sequence is that of Small ribosomal subunit protein uS2 from Halorhodospira halophila (strain DSM 244 / SL1) (Ectothiorhodospira halophila (strain DSM 244 / SL1)).